The following is a 155-amino-acid chain: MSRRGTAEEKTAKSDPIYRNRLVNMLVNRILKHGKKSLAYQIIYRALKKIQQKTETNPLCVLRQAIRGVTPDIAVKARRVGGSTHQVPIEIGSTQGKALAIRWLLGASRKRPGRNMAFKLSSELVDAAKGSGDAIRKKEETHRMAEANRAFAHFR.

Belongs to the universal ribosomal protein uS7 family. In terms of assembly, part of the 30S ribosomal subunit.

The protein localises to the plastid. It localises to the chloroplast. Functionally, one of the primary rRNA binding proteins, it binds directly to 16S rRNA where it nucleates assembly of the head domain of the 30S subunit. This chain is Small ribosomal subunit protein uS7cz/uS7cy (rps7-A), found in Nandina domestica (Heavenly bamboo).